The sequence spans 603 residues: MNHIRNFSIIAHIDHGKSTLADRIIQRCGGLQDREMSAQVLDSMDLEKERGITIKAQTAALKYKARDGQIYNLNLIDTPGHVDFSYEVSRSLSACEGALLVVDASQGVEAQTVANCYTALDLGVEVVPVLNKMDLPQADPENAKQEIEDVIGIDATDAIPCSAKTGMGIDEILEAVIARVPPPKGNPDGALRAMIIDSWYDAYVGVVMLVRVVDGRLAKGDRIKLMASEAMYNAEQLGVFTPHTEPRQSLEAGEVGFVIAGIKELQAARVGDTVTLIKPGTGGAAFTATQALPGFKEIQPQVFAGLYPTEASEYDSLRDALEKLKLNDASLHYEPEVSQALGFGFRCGFLGLLHMEIVQERLEREFDQDLITTAPSVVYEVLKADGEIIKVENPSKIPDAGRVTEIREPIVTVHLYMPQDYVGAVMTLANLKRGVQLNMAYHGKQVMLTYEMPLGEIVLDFFDKLKSVSRGYASMDYEFKEFRASDVVKVDILLNGEKVDALSIIVHRSQSAYRGRAVVAKMREIISRQQFDVAIQAAIGANIIARETIKALRKNVIAKCYGGDISRKRKLLEKQKAGKKRMKQIGSVEVPQEAFLAILQVEE.

Positions 2 to 184 constitute a tr-type G domain; sequence NHIRNFSIIA…AVIARVPPPK (183 aa). GTP-binding positions include 14–19 and 131–134; these read DHGKST and NKMD.

The protein belongs to the TRAFAC class translation factor GTPase superfamily. Classic translation factor GTPase family. LepA subfamily.

The protein resides in the cell inner membrane. The catalysed reaction is GTP + H2O = GDP + phosphate + H(+). Functionally, required for accurate and efficient protein synthesis under certain stress conditions. May act as a fidelity factor of the translation reaction, by catalyzing a one-codon backward translocation of tRNAs on improperly translocated ribosomes. Back-translocation proceeds from a post-translocation (POST) complex to a pre-translocation (PRE) complex, thus giving elongation factor G a second chance to translocate the tRNAs correctly. Binds to ribosomes in a GTP-dependent manner. This is Elongation factor 4 from Polaromonas sp. (strain JS666 / ATCC BAA-500).